A 380-amino-acid chain; its full sequence is Phospho-N-acetylmuramoyl-pentapeptide-transferase (380 aa).

Helical transmembrane passes span Ile26–Glu46, Met75–Gly95, Leu98–Trp118, Leu135–Pro155, Gly160–Pro180, Leu183–Thr203, Ile222–Phe242, Leu259–Tyr279, Val283–Leu303, Ala311–Phe331, and Lys357–Leu377.

This sequence belongs to the glycosyltransferase 4 family. MraY subfamily. Mg(2+) is required as a cofactor.

Its subcellular location is the cell inner membrane. It carries out the reaction UDP-N-acetyl-alpha-D-muramoyl-L-alanyl-gamma-D-glutamyl-meso-2,6-diaminopimeloyl-D-alanyl-D-alanine + di-trans,octa-cis-undecaprenyl phosphate = di-trans,octa-cis-undecaprenyl diphospho-N-acetyl-alpha-D-muramoyl-L-alanyl-D-glutamyl-meso-2,6-diaminopimeloyl-D-alanyl-D-alanine + UMP. Its pathway is cell wall biogenesis; peptidoglycan biosynthesis. Its function is as follows. Catalyzes the initial step of the lipid cycle reactions in the biosynthesis of the cell wall peptidoglycan: transfers peptidoglycan precursor phospho-MurNAc-pentapeptide from UDP-MurNAc-pentapeptide onto the lipid carrier undecaprenyl phosphate, yielding undecaprenyl-pyrophosphoryl-MurNAc-pentapeptide, known as lipid I. The chain is Phospho-N-acetylmuramoyl-pentapeptide-transferase from Anaeromyxobacter sp. (strain Fw109-5).